The sequence spans 334 residues: MAARKETGNTAPIAETAVKQVQIDGLVVLKIIKHYQEEGHGSEVVQGVLLGLVVDDRLEITNCFPFPQHTEDDVDFDEVQYQMEMMRSLRHVNIDHLHVGWYQSTFYGTFVSRALLDSQFSYQHAIEESVVLIYDPIKTSQGSLSLKAYRLTPKLMEICKEKDFSAEGLKKANVAYEDMFEEVPIVIKNSHLINVLVWELDKKAPVTEKHELLNLSSSNHLEKSLQLLMDRVDEMSQDIVKYNTYQRNVGKQQQQKHQYTQRKQQENLQRLSRGETPLPEEDVNKMFKPPVTPSRMDPLLIAGQINTYIQHIKGFTSQNLGKLFMAEALQDQTN.

The MPN domain occupies 21–155; that stretch reads VQIDGLVVLK…LKAYRLTPKL (135 aa). The interval 247–284 is disordered; sequence RNVGKQQQQKHQYTQRKQQENLQRLSRGETPLPEEDVN. Residues 251-262 are compositionally biased toward low complexity; sequence KQQQQKHQYTQR.

This sequence belongs to the eIF-3 subunit H family. As to quaternary structure, component of the eukaryotic translation initiation factor 3 (eIF-3) complex, which is composed of 13 subunits: eif3a, eif3b, eif3c, eif3d, eif3e, eif3f, eif3g, eif3h, eif3i, eif3j, eif3k, eif3l and eif3m.

Its subcellular location is the cytoplasm. Functionally, component of the eukaryotic translation initiation factor 3 (eIF-3) complex, which is involved in protein synthesis of a specialized repertoire of mRNAs and, together with other initiation factors, stimulates binding of mRNA and methionyl-tRNAi to the 40S ribosome. The eIF-3 complex specifically targets and initiates translation of a subset of mRNAs involved in cell proliferation. The protein is Eukaryotic translation initiation factor 3 subunit H (eif3h) of Xenopus laevis (African clawed frog).